Here is a 72-residue protein sequence, read N- to C-terminus: Translation initiation factor IF-1 (72 aa).

Residues 1-72 (MSKEEAIEVE…SRGRITYRAK (72 aa)) form the S1-like domain.

Belongs to the IF-1 family. In terms of assembly, component of the 30S ribosomal translation pre-initiation complex which assembles on the 30S ribosome in the order IF-2 and IF-3, IF-1 and N-formylmethionyl-tRNA(fMet); mRNA recruitment can occur at any time during PIC assembly.

The protein resides in the cytoplasm. One of the essential components for the initiation of protein synthesis. Stabilizes the binding of IF-2 and IF-3 on the 30S subunit to which N-formylmethionyl-tRNA(fMet) subsequently binds. Helps modulate mRNA selection, yielding the 30S pre-initiation complex (PIC). Upon addition of the 50S ribosomal subunit IF-1, IF-2 and IF-3 are released leaving the mature 70S translation initiation complex. The polypeptide is Translation initiation factor IF-1 (Geobacter metallireducens (strain ATCC 53774 / DSM 7210 / GS-15)).